A 280-amino-acid chain; its full sequence is Pupal cuticle protein 36a (280 aa).

An N-terminal signal peptide occupies residues 1–15; it reads MKLFVLAAVLGVCLA. The Chitin-binding type R&amp;R domain maps to 135–198; that stretch reads AEGFAYDFET…SQGAHLPTPP (64 aa). Residues 258-280 are disordered; it reads GAGRAGGTATSASEAPTTTIRLM.

This chain is Pupal cuticle protein 36a (PCP36a), found in Manduca sexta (Tobacco hawkmoth).